A 100-amino-acid polypeptide reads, in one-letter code: Urease subunit gamma (100 aa).

It belongs to the urease gamma subunit family. Heterotrimer of UreA (gamma), UreB (beta) and UreC (alpha) subunits. Three heterotrimers associate to form the active enzyme.

It is found in the cytoplasm. It catalyses the reaction urea + 2 H2O + H(+) = hydrogencarbonate + 2 NH4(+). The protein operates within nitrogen metabolism; urea degradation; CO(2) and NH(3) from urea (urease route): step 1/1. This chain is Urease subunit gamma, found in Nocardia farcinica (strain IFM 10152).